The primary structure comprises 118 residues: MARIAGINVPTQKHAVIALTSIYGIGTSRAKEICAKANVAPDKKIRDLSDSEVEALRQVVSEYQVEGDLRRQVSMDIKRLMDLGCFRGLRHRRSLPVRGQRTKTNARTRKGPRRPIKR.

Residues S94–R118 are disordered.

The protein belongs to the universal ribosomal protein uS13 family. Part of the 30S ribosomal subunit. Forms a loose heterodimer with protein S19. Forms two bridges to the 50S subunit in the 70S ribosome.

In terms of biological role, located at the top of the head of the 30S subunit, it contacts several helices of the 16S rRNA. In the 70S ribosome it contacts the 23S rRNA (bridge B1a) and protein L5 of the 50S subunit (bridge B1b), connecting the 2 subunits; these bridges are implicated in subunit movement. Contacts the tRNAs in the A and P-sites. The protein is Small ribosomal subunit protein uS13 of Dichelobacter nodosus (strain VCS1703A).